The primary structure comprises 272 residues: 27-O-demethylrifamycin SV methyltransferase (272 aa).

S-adenosyl-L-methionine contacts are provided by residues S89, Q94, 117-118 (DA), L134, and H139.

Belongs to the class I-like SAM-binding methyltransferase superfamily. Exists probably as a trimer.

The catalysed reaction is 27-O-demethylrifamycin SV + S-adenosyl-L-methionine = rifamycin SV + S-adenosyl-L-homocysteine + H(+). Its pathway is antibiotic biosynthesis; rifamycin B biosynthesis. With respect to regulation, slightly inhibited by Ca(2+) and Mg(2+). Strongly inhibited by Zn(2+), Ni(2+) and Co(2+). In terms of biological role, catalyzes the methylation of 27-O-demethylrifamycin SV (DMRSV) to rifamycin SV. This is 27-O-demethylrifamycin SV methyltransferase from Amycolatopsis mediterranei (strain S699) (Nocardia mediterranei).